We begin with the raw amino-acid sequence, 312 residues long: tRNA-cytidine(32) 2-sulfurtransferase (312 aa).

A PP-loop motif motif is present at residues 39-44; that stretch reads SGGKDS. [4Fe-4S] cluster contacts are provided by Cys114, Cys117, and Cys205.

This sequence belongs to the TtcA family. As to quaternary structure, homodimer. Mg(2+) serves as cofactor. The cofactor is [4Fe-4S] cluster.

It localises to the cytoplasm. It catalyses the reaction cytidine(32) in tRNA + S-sulfanyl-L-cysteinyl-[cysteine desulfurase] + AH2 + ATP = 2-thiocytidine(32) in tRNA + L-cysteinyl-[cysteine desulfurase] + A + AMP + diphosphate + H(+). Its pathway is tRNA modification. Functionally, catalyzes the ATP-dependent 2-thiolation of cytidine in position 32 of tRNA, to form 2-thiocytidine (s(2)C32). The sulfur atoms are provided by the cysteine/cysteine desulfurase (IscS) system. The polypeptide is tRNA-cytidine(32) 2-sulfurtransferase (Cupriavidus pinatubonensis (strain JMP 134 / LMG 1197) (Cupriavidus necator (strain JMP 134))).